The sequence spans 260 residues: E3 ubiquitin-protein ligase SRFP1 (260 aa).

The CHY-type zinc finger occupies 11–80 (FGRMGFGCKH…VAQVCYNCGV (70 aa)). The Zn(2+) site is built by Cys18, His20, Cys31, Cys32, Cys38, Cys41, His42, His50, Cys62, Cys65, Cys75, Cys78, Cys87, Cys90, His103, Cys104, Cys107, Cys110, His120, Cys121, Cys124, Cys127, His136, and Cys138. The segment at 82–146 (MGEYFCSACK…CCIENSMKNN (65 aa)) adopts a CTCHY-type zinc-finger fold. An RING-type; atypical zinc finger spans residues 147–190 (CPICYEYLFDSLRETSVLRCGHTMHLQCFHEMLKHDKFSCPICS).

In terms of tissue distribution, expressed in roots, leaves, nodes and panicles.

Its subcellular location is the nucleus. It is found in the cytoplasm. It catalyses the reaction S-ubiquitinyl-[E2 ubiquitin-conjugating enzyme]-L-cysteine + [acceptor protein]-L-lysine = [E2 ubiquitin-conjugating enzyme]-L-cysteine + N(6)-ubiquitinyl-[acceptor protein]-L-lysine.. The protein operates within protein modification; protein ubiquitination. Its function is as follows. Possesses E3 ubiquitin-protein ligase activity in vitro. Possesses transactivation activity in yeast cells. May modulate abiotic stress responses by negatively regulating antioxidant enzymes-mediated reactive oxygen species (ROS) removal. This chain is E3 ubiquitin-protein ligase SRFP1, found in Oryza sativa subsp. japonica (Rice).